Here is a 360-residue protein sequence, read N- to C-terminus: Alanine racemase (360 aa).

Residue Lys-34 is the Proton acceptor; specific for D-alanine of the active site. Lys-34 carries the N6-(pyridoxal phosphate)lysine modification. A substrate-binding site is contributed by Arg-129. Tyr-254 serves as the catalytic Proton acceptor; specific for L-alanine. A substrate-binding site is contributed by Met-302.

This sequence belongs to the alanine racemase family. Requires pyridoxal 5'-phosphate as cofactor.

The enzyme catalyses L-alanine = D-alanine. The protein operates within amino-acid biosynthesis; D-alanine biosynthesis; D-alanine from L-alanine: step 1/1. Its function is as follows. Catalyzes the interconversion of L-alanine and D-alanine. May also act on other amino acids. The polypeptide is Alanine racemase (alr) (Pectobacterium carotovorum subsp. carotovorum (strain PC1)).